A 364-amino-acid polypeptide reads, in one-letter code: Fructose-1,6-bisphosphatase class 1 2 (364 aa).

Positions 99, 121, 123, and 124 each coordinate Mg(2+). Substrate-binding positions include 124–127 (DGSS) and N220. Position 292 (E292) interacts with Mg(2+).

It belongs to the FBPase class 1 family. In terms of assembly, homotetramer. Requires Mg(2+) as cofactor.

The protein localises to the cytoplasm. The enzyme catalyses beta-D-fructose 1,6-bisphosphate + H2O = beta-D-fructose 6-phosphate + phosphate. It functions in the pathway carbohydrate biosynthesis; gluconeogenesis. The chain is Fructose-1,6-bisphosphatase class 1 2 from Polaromonas naphthalenivorans (strain CJ2).